The following is a 378-amino-acid chain: Signal recognition particle receptor FtsY (378 aa).

GTP contacts are provided by residues 184–191 (GVNGTGKT), 266–270 (DTAGR), and 330–333 (TKLD).

The protein belongs to the GTP-binding SRP family. FtsY subfamily. Part of the signal recognition particle protein translocation system, which is composed of SRP and FtsY. SRP is a ribonucleoprotein composed of Ffh and a 4.5S RNA molecule.

Its subcellular location is the cell membrane. The protein localises to the cytoplasm. The catalysed reaction is GTP + H2O = GDP + phosphate + H(+). Involved in targeting and insertion of nascent membrane proteins into the cytoplasmic membrane. Acts as a receptor for the complex formed by the signal recognition particle (SRP) and the ribosome-nascent chain (RNC). Interaction with SRP-RNC leads to the transfer of the RNC complex to the Sec translocase for insertion into the membrane, the hydrolysis of GTP by both Ffh and FtsY, and the dissociation of the SRP-FtsY complex into the individual components. The protein is Signal recognition particle receptor FtsY of Buchnera aphidicola subsp. Acyrthosiphon pisum (strain APS) (Acyrthosiphon pisum symbiotic bacterium).